Reading from the N-terminus, the 335-residue chain is Geranylgeranyl pyrophosphate synthase BTS1 (335 aa).

Isopentenyl diphosphate-binding residues include lysine 36, arginine 39, and histidine 68. Mg(2+)-binding residues include aspartate 75 and aspartate 79. Arginine 84 serves as a coordination point for dimethylallyl diphosphate. Arginine 85 contacts isopentenyl diphosphate. Dimethylallyl diphosphate-binding residues include lysine 169, threonine 170, glutamine 206, asparagine 213, lysine 223, and lysine 233.

Belongs to the FPP/GGPP synthase family. Mg(2+) serves as cofactor.

The protein resides in the cytoplasm. It catalyses the reaction isopentenyl diphosphate + dimethylallyl diphosphate = (2E)-geranyl diphosphate + diphosphate. The catalysed reaction is isopentenyl diphosphate + (2E)-geranyl diphosphate = (2E,6E)-farnesyl diphosphate + diphosphate. The enzyme catalyses isopentenyl diphosphate + (2E,6E)-farnesyl diphosphate = (2E,6E,10E)-geranylgeranyl diphosphate + diphosphate. Its pathway is isoprenoid biosynthesis; farnesyl diphosphate biosynthesis; farnesyl diphosphate from geranyl diphosphate and isopentenyl diphosphate: step 1/1. It functions in the pathway isoprenoid biosynthesis; geranyl diphosphate biosynthesis; geranyl diphosphate from dimethylallyl diphosphate and isopentenyl diphosphate: step 1/1. It participates in isoprenoid biosynthesis; geranylgeranyl diphosphate biosynthesis; geranylgeranyl diphosphate from farnesyl diphosphate and isopentenyl diphosphate: step 1/1. Functionally, catalyzes the trans-addition of the 3 molecules of IPP onto DMAPP to form geranylgeranyl pyrophosphate. Required for the membrane attachment of YPT1 and SEC4. May be involved in vesicle trafficking and protein sorting. The sequence is that of Geranylgeranyl pyrophosphate synthase BTS1 (BTS1) from Saccharomyces cerevisiae (strain ATCC 204508 / S288c) (Baker's yeast).